The sequence spans 116 residues: MISKANKNATRKKRHGRVRRTIIGTAARPRLNVFRSNKNIYVQVIDDATHATLASASSLDLEKGNTTDAASAVGKLAAERALEKGIETVVFDRGGYLYHGRIKAVAEAAREAGLKF.

It belongs to the universal ribosomal protein uL18 family. As to quaternary structure, part of the 50S ribosomal subunit; part of the 5S rRNA/L5/L18/L25 subcomplex. Contacts the 5S and 23S rRNAs.

In terms of biological role, this is one of the proteins that bind and probably mediate the attachment of the 5S RNA into the large ribosomal subunit, where it forms part of the central protuberance. This is Large ribosomal subunit protein uL18 from Exiguobacterium sibiricum (strain DSM 17290 / CCUG 55495 / CIP 109462 / JCM 13490 / 255-15).